Reading from the N-terminus, the 510-residue chain is NAD(P)H-quinone oxidoreductase subunit 2 A, chloroplastic (510 aa).

Helical transmembrane passes span 31–51, 57–77, 99–119, 124–144, 149–169, 184–204, 229–249, 261–281, 295–315, 323–343, 354–374, 395–415, 418–438, and 484–504; these read LIFP…IDLT, IPWL…ALLF, IFQF…VEYI, MAIT…MFLC, LITI…LSGY, LLMG…LYGL, ISIA…LAPF, PTPV…ALAT, WHLL…LIAI, MLAY…IVGD, YMLF…LFGL, ALSL…AGFF, LYLF…IGLL, and MIVC…IIAI.

This sequence belongs to the complex I subunit 2 family. As to quaternary structure, NDH is composed of at least 16 different subunits, 5 of which are encoded in the nucleus.

It is found in the plastid. It localises to the chloroplast thylakoid membrane. The catalysed reaction is a plastoquinone + NADH + (n+1) H(+)(in) = a plastoquinol + NAD(+) + n H(+)(out). It carries out the reaction a plastoquinone + NADPH + (n+1) H(+)(in) = a plastoquinol + NADP(+) + n H(+)(out). In terms of biological role, NDH shuttles electrons from NAD(P)H:plastoquinone, via FMN and iron-sulfur (Fe-S) centers, to quinones in the photosynthetic chain and possibly in a chloroplast respiratory chain. The immediate electron acceptor for the enzyme in this species is believed to be plastoquinone. Couples the redox reaction to proton translocation, and thus conserves the redox energy in a proton gradient. The sequence is that of NAD(P)H-quinone oxidoreductase subunit 2 A, chloroplastic from Nicotiana tabacum (Common tobacco).